The following is a 242-amino-acid chain: Myogenic factor 6 (242 aa).

The segment at 31 to 63 is disordered; it reads SPLYPGSDGTLSPCQDQMPPEAGSDSSGEEHVL. Positions 93–144 constitute a bHLH domain; sequence DRRKAATLRERRRLKKINEAFEALKRRTVANPNQRLPKVEILRSAINYIERL.

As to quaternary structure, efficient DNA binding requires dimerization with another bHLH protein.

Its subcellular location is the nucleus. Its function is as follows. Involved in muscle differentiation (myogenic factor). Induces fibroblasts to differentiate into myoblasts. Probable sequence specific DNA-binding protein. The chain is Myogenic factor 6 (MYF6) from Sus scrofa (Pig).